Reading from the N-terminus, the 360-residue chain is D-xylose 1-dehydrogenase [NADP(+)] (360 aa).

The protein belongs to the Gfo/Idh/MocA family. In terms of assembly, homotretramer.

The enzyme catalyses D-xylofuranose + NADP(+) = D-xylono-1,4-lactone + NADPH + H(+). In terms of biological role, NADP-dependent D-xylose dehydrogenase involved in the degradation of D-xylose, a major component of hemicelluloses such as xylan. In addition to D-xylose, oxidizes D-ribose at similar kinetic constants, whereas D-glucose is oxidized with about 70-fold lower catalytic efficiency. This Haloarcula marismortui (strain ATCC 43049 / DSM 3752 / JCM 8966 / VKM B-1809) (Halobacterium marismortui) protein is D-xylose 1-dehydrogenase [NADP(+)] (gfo6).